The following is a 239-amino-acid chain: Ribosomal RNA small subunit methyltransferase G (239 aa).

S-adenosyl-L-methionine-binding positions include Gly77, Phe82, 128–129, and Arg146; that span reads AE. Positions 215 to 239 are disordered; it reads DKKRQTPKKYPRKPGTPNKTPLLEK.

The protein belongs to the methyltransferase superfamily. RNA methyltransferase RsmG family.

It localises to the cytoplasm. Specifically methylates the N7 position of guanine in position 535 of 16S rRNA. The polypeptide is Ribosomal RNA small subunit methyltransferase G (Staphylococcus aureus (strain USA300)).